The chain runs to 171 residues: RNA silencing suppressor p19 (171 aa).

A compositionally biased stretch (basic and acidic residues) spans 1 to 15 (MERAIPGNDTREPAY). The interval 1–32 (MERAIPGNDTREPAYGERWNGGPGGSTSPFQL) is disordered.

Belongs to the tombusvirus protein p19 family. Homodimer.

Functionally, viral suppressor of RNA silencing which binds specifically to silencing RNAs (siRNAs). Acts as a molecular caliper to specifically select siRNAs based on the length of the duplex region of the RNA. This chain is RNA silencing suppressor p19, found in Capsicum annuum (Capsicum pepper).